Reading from the N-terminus, the 257-residue chain is MVSWMICRLVVLVFGMLCPAYASYKAVKTKNIREYVRWMMYWIVFALFMAAEIITDIFISWFPFYYEIKMAFVLWLLSPYTKGASLLYRKFVHPSLSRHEKEIDAYIVQAKERSYETVLSFGKRGLNIAASAAVQAATKSQGALAGRLRSFSMQDLRAIPDAPAPAYHDPLYLEDQVPHQRPPIGYRAGGLQDSDTEDECWSDTEAVPRAPARPREKPLIRSQSLRVVKRKPPVREGTSRSLKVRTRKKTVPSDMDS.

A run of 2 helical transmembrane segments spans residues 1 to 21 (MVSWMICRLVVLVFGMLCPAY) and 42 to 62 (WIVFALFMAAEIITDIFISWF). Phosphoserine is present on residues Ser152 and Ser194. Residues 178–257 (PHQRPPIGYR…KKTVPSDMDS (80 aa)) form a disordered region. Thr196 is modified (phosphothreonine). Phosphoserine is present on Ser202. Thr250 carries the post-translational modification Phosphothreonine. Phosphoserine is present on Ser253.

This sequence belongs to the DP1 family.

It is found in the endoplasmic reticulum membrane. Its function is as follows. Microtubule-binding protein required to ensure proper cell division and nuclear envelope reassembly by sequestering the endoplasmic reticulum away from chromosomes during mitosis. Probably acts by clearing the endoplasmic reticulum membrane from metaphase chromosomes. In Pongo abelii (Sumatran orangutan), this protein is Receptor expression-enhancing protein 4 (REEP4).